We begin with the raw amino-acid sequence, 430 residues long: Putative ABC transporter periplasmic-binding protein YcjN (430 aa).

An N-terminal signal peptide occupies residues 1-19; sequence MIKSKIVLLSALVSCALIS.

The protein belongs to the bacterial solute-binding protein 1 family.

It is found in the periplasm. In terms of biological role, probably part of the binding-protein-dependent transport system YcjNOP. The protein is Putative ABC transporter periplasmic-binding protein YcjN (ycjN) of Escherichia coli (strain K12).